A 186-amino-acid polypeptide reads, in one-letter code: Ribosome-recycling factor (186 aa).

The protein belongs to the RRF family.

The protein resides in the cytoplasm. In terms of biological role, responsible for the release of ribosomes from messenger RNA at the termination of protein biosynthesis. May increase the efficiency of translation by recycling ribosomes from one round of translation to another. The polypeptide is Ribosome-recycling factor (Leifsonia xyli subsp. xyli (strain CTCB07)).